The primary structure comprises 194 residues: Calcium channel flower (194 aa).

3 helical membrane passes run 34 to 54 (LLGI…VFSI), 59 to 79 (VSCL…MLLE), and 107 to 127 (GLYI…ASLF).

Belongs to the calcium channel flower family. In terms of assembly, homomultimer. Associates with the dally/ magu complex.

The protein localises to the cell membrane. The protein resides in the cytoplasmic vesicle. Its subcellular location is the secretory vesicle. It localises to the synaptic vesicle membrane. It is found in the presynaptic cell membrane. The protein localises to the endosome. With respect to regulation, channel activity is inhibited by La(3+), which reduces Ca(2+) influx and thus inhibits it's function in promoting activity-dependent bulk endocytosis (ADBE) in response to high stimuli. In terms of biological role, transmembrane protein which mediates synaptic endocytosis, fitness-based cell culling, neuronal culling, morphogen gradient scaling, and calcium transport. Regulates synaptic endocytosis and hence couples exo- with endocytosis. Controls two major modes of synaptic vesicle (SV) endocytosis in the synaptic boutons of neuromuscular junctions (NMJs); Ca(2+) channel-independent Clathrin-mediated endocytosis (CME) in response to mild stimulation, and Ca(2+) channel-dependent activity-dependent bulk endocytosis (ADBE) in response to strong stimulation. Functions in ADBE and subsequent SV reformation from bulk endosomes by initiating Ca(2+) channel-dependent phosphatidylinositol 4,5-bisphosphate (PtdIns(4,5)P2) compartmentalization in synaptic boutons. There it acts at the periactive zone to provide the low Ca(2+) levels required to initiate Calcineurin activation and upregulate PtdIns(4,5)P2. Conversely PtdIns(4,5)P2 enhances fwe Ca(2+) channel-activity, establishing a positive feedback loop that induces PtdIns(4,5)P2 microdomain at the periactive zone. These microdomains trigger bulk membrane invagination (i.e. ADBE) by triggering actin polymerization while also promoting localization of fwe to bulk endosomes, thereby removing the ADBE trigger to reduce endocytosis and prevent excess membrane uptake. PtdIns(4,5)P2 then promotes SV reformation from the bulk endosomes, to coordinate ADBE and subsequent SV reformation. Different combinations of the flower isoforms at the cell membrane are also required for the identification and elimination of suboptimal or supernumerary cells during development, regeneration, and adulthood. Required for the recognition and elimination of unfit cells in the developing wing during cell competition. In the developing pupal retina, mediates the elimination of unwanted postmitotic neurons, including supernumerary photoreceptor neurons that form at the periphery of the retina and are contained within incomplete ommatidia units. Also required for efficient elimination and replacement of old neurons by newly generated neurons during regeneration in the adult brain following mechanical injury. Downstream of the flower fitness fingerprints, cells identified as unwanted or unfit are eliminated via apoptosis through the expression of ahuizotl (azot). However, the cells marked for elimination by the flower isoforms only undergo apoptosis if additional thresholds are met; (1) their neighboring fit/healthy cells express different levels of the fwe isoforms, and (2) the levels of the protective signal SPARC expressed by the loser or unwanted cells are unable to inhibit caspase activation. These additional thresholds for flower-mediated apoptosis, allows useful cells to recover from transient and limited stress before they are unnecessarily eliminated. Functions with dally and magu in a mechanism of scaling, which utilises apoptosis to ensure that the dpp morphogen gradient, which mediates organ growth, remains proportional to the size of the growing wing. In this mechanism, fwe represses dally- and Magu-dependent activity in expanding the gradient, and dally/Magu inhibits fwe-dependent apoptosis to keep cell death rate low. When the levels of these different proteins are optimally regulated the gradient correctly scales with organ growth but when this fails, fwe-mediated apoptosis is activated to trim the developing tissue to match the correct size of the gradient. This Drosophila erecta (Fruit fly) protein is Calcium channel flower.